Here is a 103-residue protein sequence, read N- to C-terminus: Small ribosomal subunit protein uS14c (103 aa).

The interval 26-56 (SSKKKIRSKVSPLSLSEKTKMQEKLQSLPRN) is disordered.

It belongs to the universal ribosomal protein uS14 family. Part of the 30S ribosomal subunit.

It localises to the plastid. It is found in the chloroplast. Its function is as follows. Binds 16S rRNA, required for the assembly of 30S particles. The chain is Small ribosomal subunit protein uS14c from Saccharum officinarum (Sugarcane).